Reading from the N-terminus, the 487-residue chain is GTPase Der (487 aa).

EngA-type G domains are found at residues 3–166 and 193–366; these read PVIA…PRDA and IKIA…QSAV. Residues 9–16, 56–60, 118–121, 199–206, 246–250, and 311–314 contribute to the GTP site; these read GRPNVGKS, DTGGI, NKID, DTAGV, and NKWD. One can recognise a KH-like domain in the interval 367 to 451; the sequence is TRWPTSRLTQ…PIRIEYKGGE (85 aa). Positions 448–461 are enriched in basic and acidic residues; the sequence is KGGENPYEGKKNTL. Residues 448 to 487 are disordered; sequence KGGENPYEGKKNTLTDRQVNKKRRLMSHHKKAEKKRRDKR. Basic residues predominate over residues 467–487; that stretch reads NKKRRLMSHHKKAEKKRRDKR.

This sequence belongs to the TRAFAC class TrmE-Era-EngA-EngB-Septin-like GTPase superfamily. EngA (Der) GTPase family. In terms of assembly, associates with the 50S ribosomal subunit.

Functionally, GTPase that plays an essential role in the late steps of ribosome biogenesis. This Pseudomonas putida (strain ATCC 47054 / DSM 6125 / CFBP 8728 / NCIMB 11950 / KT2440) protein is GTPase Der.